A 354-amino-acid polypeptide reads, in one-letter code: Uroporphyrinogen decarboxylase (354 aa).

Substrate is bound by residues 27 to 31 (RQAGR), D77, Y154, S209, and H327.

The protein belongs to the uroporphyrinogen decarboxylase family. Homodimer.

The protein localises to the cytoplasm. It catalyses the reaction uroporphyrinogen III + 4 H(+) = coproporphyrinogen III + 4 CO2. It participates in porphyrin-containing compound metabolism; protoporphyrin-IX biosynthesis; coproporphyrinogen-III from 5-aminolevulinate: step 4/4. Its function is as follows. Catalyzes the decarboxylation of four acetate groups of uroporphyrinogen-III to yield coproporphyrinogen-III. The chain is Uroporphyrinogen decarboxylase from Shewanella putrefaciens (strain CN-32 / ATCC BAA-453).